Here is a 492-residue protein sequence, read N- to C-terminus: 3-octaprenyl-4-hydroxybenzoate carboxy-lyase (492 aa).

Asn175 is a Mn(2+) binding site. Prenylated FMN contacts are provided by residues 178 to 180 (IYR), 192 to 194 (RWL), and 197 to 198 (RG). Position 241 (Glu241) interacts with Mn(2+). Asp290 acts as the Proton donor in catalysis.

This sequence belongs to the UbiD family. As to quaternary structure, homohexamer. Requires prenylated FMN as cofactor. Mn(2+) serves as cofactor.

The protein resides in the cell membrane. It catalyses the reaction a 4-hydroxy-3-(all-trans-polyprenyl)benzoate + H(+) = a 2-(all-trans-polyprenyl)phenol + CO2. The protein operates within cofactor biosynthesis; ubiquinone biosynthesis. Catalyzes the decarboxylation of 3-octaprenyl-4-hydroxy benzoate to 2-octaprenylphenol, an intermediate step in ubiquinone biosynthesis. This is 3-octaprenyl-4-hydroxybenzoate carboxy-lyase from Salmonella paratyphi A (strain ATCC 9150 / SARB42).